Reading from the N-terminus, the 418-residue chain is MLKKDMNIADYDPQLFAAIEDETRRQEEHIELIASENYCSPRVIEAQGTQLTNKYAEGYPGKRYYGGCEHVDIVEELAISRAKELFGATYANVQPHSGSQANAAVFMALLQGGDTVLGMSLAHGGHLTHGSHVSFSGKLYNAVQYGIDETTGQIDYAEVERLAVEHKPKMIIAGFSAYSGIIDWGKFREIADKVGAYLFVDMAHVAGLVAAGIYPNPMPHAHVVTTTTHKTLAGPRGGLILSSINDEDIYKKLNSAVFPGGQGGPLMHVIAAKAVAFKEALDPEFTTYQEQVVVNAKAMARTFIERGYNVVSGGTDNHLFLLDLISKDITGKDADAALGNANITVNKNSVPNDPRSPFVTSGLRIGSPAITRRGFGEEESVQLTHWMCDVLDDISDLAVSERVKGQVLELCAKFPVYG.

(6S)-5,6,7,8-tetrahydrofolate-binding positions include leucine 121 and 125–127 (GHL). At lysine 230 the chain carries N6-(pyridoxal phosphate)lysine. Position 356-358 (356-358 (SPF)) interacts with (6S)-5,6,7,8-tetrahydrofolate.

It belongs to the SHMT family. Homodimer. It depends on pyridoxal 5'-phosphate as a cofactor.

It localises to the cytoplasm. It catalyses the reaction (6R)-5,10-methylene-5,6,7,8-tetrahydrofolate + glycine + H2O = (6S)-5,6,7,8-tetrahydrofolate + L-serine. Its pathway is one-carbon metabolism; tetrahydrofolate interconversion. It functions in the pathway amino-acid biosynthesis; glycine biosynthesis; glycine from L-serine: step 1/1. Its function is as follows. Catalyzes the reversible interconversion of serine and glycine with tetrahydrofolate (THF) serving as the one-carbon carrier. This reaction serves as the major source of one-carbon groups required for the biosynthesis of purines, thymidylate, methionine, and other important biomolecules. Also exhibits THF-independent aldolase activity toward beta-hydroxyamino acids, producing glycine and aldehydes, via a retro-aldol mechanism. This Shewanella pealeana (strain ATCC 700345 / ANG-SQ1) protein is Serine hydroxymethyltransferase.